The primary structure comprises 179 residues: Bifunctional protein PyrR (179 aa).

Residues 100–112 (VILVDDVLFTGRT) carry the PRPP-binding motif.

Belongs to the purine/pyrimidine phosphoribosyltransferase family. PyrR subfamily. Homodimer and homohexamer; in equilibrium.

It carries out the reaction UMP + diphosphate = 5-phospho-alpha-D-ribose 1-diphosphate + uracil. In terms of biological role, regulates transcriptional attenuation of the pyrimidine nucleotide (pyr) operon by binding in a uridine-dependent manner to specific sites on pyr mRNA. This disrupts an antiterminator hairpin in the RNA and favors formation of a downstream transcription terminator, leading to a reduced expression of downstream genes. Also displays a weak uracil phosphoribosyltransferase activity which is not physiologically significant. The protein is Bifunctional protein PyrR of Geobacillus sp. (strain WCH70).